The sequence spans 182 residues: ATP-dependent protease subunit HslV (182 aa).

Residue Thr10 is part of the active site. Residues Ala166, Cys169, and Ser172 each coordinate Na(+).

This sequence belongs to the peptidase T1B family. HslV subfamily. As to quaternary structure, a double ring-shaped homohexamer of HslV is capped on each side by a ring-shaped HslU homohexamer. The assembly of the HslU/HslV complex is dependent on binding of ATP.

The protein localises to the cytoplasm. The catalysed reaction is ATP-dependent cleavage of peptide bonds with broad specificity.. With respect to regulation, allosterically activated by HslU binding. In terms of biological role, protease subunit of a proteasome-like degradation complex believed to be a general protein degrading machinery. The polypeptide is ATP-dependent protease subunit HslV (Rickettsia bellii (strain OSU 85-389)).